Reading from the N-terminus, the 642-residue chain is Probable serine/threonine-protein kinase drkA (642 aa).

The N-terminal stretch at 1–23 (MKKLPFLIIIIYIFLILISISSS) is a signal peptide. Over 24 to 322 (IDYNYNNDID…KPTISLLKKY (299 aa)) the chain is Extracellular. Over residues 106 to 128 (SENSGSGSNSNSNSKNTDSSTGP) the composition is skewed to low complexity. The interval 106-136 (SENSGSGSNSNSNSKNTDSSTGPTPSPISIN) is disordered. Residues Asn136, Asn140, Asn158, Asn244, and Asn271 are each glycosylated (N-linked (GlcNAc...) asparagine). Residues 323 to 343 (LIIGFSIVGGLLIIGGCFLLI) traverse the membrane as a helical segment. Topologically, residues 344 to 642 (RNRYRSSGYY…SDLQYVRQQL (299 aa)) are cytoplasmic. One can recognise a Protein kinase domain in the interval 374 to 627 (IKIGVRIGKG…EQCLERLESI (254 aa)). ATP-binding positions include 380-388 (IGKGNYGEV) and Lys401. The Proton acceptor role is filled by Asp497.

The protein belongs to the protein kinase superfamily. TKL Ser/Thr protein kinase family.

It localises to the membrane. The catalysed reaction is L-seryl-[protein] + ATP = O-phospho-L-seryl-[protein] + ADP + H(+). It carries out the reaction L-threonyl-[protein] + ATP = O-phospho-L-threonyl-[protein] + ADP + H(+). This is Probable serine/threonine-protein kinase drkA (drkA) from Dictyostelium discoideum (Social amoeba).